The chain runs to 801 residues: Transferrin receptor protein 2 (801 aa).

At M1–P83 the chain is on the cytoplasmic side. The segment at P16–A45 is disordered. The Endocytosis signal motif lies at Y23–V26. Positions E35–A45 are enriched in acidic residues. Residues Y84–F104 form a helical; Signal-anchor for type II membrane protein membrane-spanning segment. Residues R105–F801 lie on the Extracellular side of the membrane. N-linked (GlcNAc...) asparagine glycosylation is found at N240, N339, N540, and N754.

The protein belongs to the peptidase M28 family. M28B subfamily. Homodimer. As to expression, predominantly expressed in liver. While the alpha form is also expressed in spleen, lung, muscle, prostate and peripheral blood mononuclear cells, the beta form is expressed in all tissues tested, albeit weakly.

The protein resides in the cell membrane. Its subcellular location is the cytoplasm. Mediates cellular uptake of transferrin-bound iron in a non-iron dependent manner. May be involved in iron metabolism, hepatocyte function and erythrocyte differentiation. In Homo sapiens (Human), this protein is Transferrin receptor protein 2 (TFR2).